The chain runs to 513 residues: uncharacterized protein (513 aa).

A run of 13 helical transmembrane segments spans residues 3–23, 47–67, 71–91, 129–149, 153–173, 177–197, 233–253, 273–293, 320–340, 374–394, 395–415, 424–444, and 462–482; these read MTAF…TYFA, LAIA…GMIA, FDGF…LYIV, TFYM…LLGL, AAVL…GMIA, VQII…IIVF, ETLS…HILI, WIIG…AAFV, FLFA…VTGL, ASVA…SLNV, AFLV…LIVF, ASGA…LVSM, and LIPL…GAWL.

It belongs to the sodium:solute symporter (SSF) (TC 2.A.21) family.

Its subcellular location is the cell membrane. This is an uncharacterized protein from Bacillus subtilis (strain 168).